Reading from the N-terminus, the 88-residue chain is UPF0297 protein YrzL (88 aa).

It belongs to the UPF0297 family.

This Bacillus subtilis (strain 168) protein is UPF0297 protein YrzL (yrzL).